The following is a 159-amino-acid chain: MVRIGLQLKANLENVTNLKAEGEDFRWYLMLKCMNCGEVTKQWVYMCLMESQPVKGGRGYAHFVSKCKLCHRENSVDIMKDSIHPYLASHNGKFHTIVSFDCRGVEPTDFSPRTGWTAEGENTSTPFEVDLTEKDWSDYDEKAQNAVGVYGVTSQFIKL.

Residues Cys33, Cys36, Cys67, and Cys70 each contribute to the Zn(2+) site.

It belongs to the UPF0587 family.

This chain is UPF0587 protein v1g245604, found in Nematostella vectensis (Starlet sea anemone).